Consider the following 254-residue polypeptide: GTP cyclohydrolase III (254 aa).

Belongs to the archaeal-type GTP cyclohydrolase family.

The catalysed reaction is GTP + 3 H2O = 2-amino-5-formylamino-6-(5-phospho-D-ribosylamino)pyrimidin-4(3H)-one + 2 phosphate + 2 H(+). Functionally, catalyzes the formation of 2-amino-5-formylamino-6-ribofuranosylamino-4(3H)-pyrimidinone ribonucleotide monophosphate and inorganic phosphate from GTP. Also has an independent pyrophosphate phosphohydrolase activity. This is GTP cyclohydrolase III from Methanobrevibacter smithii (strain ATCC 35061 / DSM 861 / OCM 144 / PS).